The following is a 145-amino-acid chain: Heat shock protein hsp-16.2 (145 aa).

One can recognise a sHSP domain in the interval 32–137 (VCRISPSESS…QGRSIPIQQA (106 aa)).

It belongs to the small heat shock protein (HSP20) family.

The sequence is that of Heat shock protein hsp-16.2 from Caenorhabditis elegans.